A 188-amino-acid chain; its full sequence is dCTP deaminase (188 aa).

Residues 111–116 (KSTYAR), 135–137 (TLE), Gln156, Tyr170, and Gln180 contribute to the dCTP site. Residue Glu137 is the Proton donor/acceptor of the active site.

Belongs to the dCTP deaminase family. As to quaternary structure, homotrimer.

It carries out the reaction dCTP + H2O + H(+) = dUTP + NH4(+). It participates in pyrimidine metabolism; dUMP biosynthesis; dUMP from dCTP (dUTP route): step 1/2. Its function is as follows. Catalyzes the deamination of dCTP to dUTP. This Pseudomonas putida (strain ATCC 700007 / DSM 6899 / JCM 31910 / BCRC 17059 / LMG 24140 / F1) protein is dCTP deaminase.